Consider the following 295-residue polypeptide: Probable alpha-L-glutamate ligase 1 (295 aa).

The ATP-grasp domain maps to 104-287 (MQLLSRKGIG…VANAIIEFIE (184 aa)). ATP is bound by residues lysine 141, 178–179 (EY), aspartate 187, and 211–213 (RSN). Positions 248, 260, and 262 each coordinate Mg(2+). Mn(2+)-binding residues include aspartate 248, glutamate 260, and asparagine 262.

This sequence belongs to the RimK family. Requires Mg(2+) as cofactor. Mn(2+) is required as a cofactor.

This chain is Probable alpha-L-glutamate ligase 1, found in Shewanella denitrificans (strain OS217 / ATCC BAA-1090 / DSM 15013).